Consider the following 339-residue polypeptide: Phenylalanine--tRNA ligase alpha subunit (339 aa).

Residue Glu254 participates in Mg(2+) binding.

The protein belongs to the class-II aminoacyl-tRNA synthetase family. Phe-tRNA synthetase alpha subunit type 1 subfamily. As to quaternary structure, tetramer of two alpha and two beta subunits. It depends on Mg(2+) as a cofactor.

It localises to the cytoplasm. The catalysed reaction is tRNA(Phe) + L-phenylalanine + ATP = L-phenylalanyl-tRNA(Phe) + AMP + diphosphate + H(+). This Desulforudis audaxviator (strain MP104C) protein is Phenylalanine--tRNA ligase alpha subunit.